The following is a 200-amino-acid chain: Lipopolysaccharide core heptose(II)-phosphate phosphatase (200 aa).

Residues Met1–Ala25 form the signal peptide.

This sequence belongs to the phosphoglycerate mutase family. Ais subfamily.

It localises to the periplasm. It functions in the pathway bacterial outer membrane biogenesis; lipopolysaccharide metabolism. Functionally, catalyzes the dephosphorylation of heptose(II) of the outer membrane lipopolysaccharide core. This chain is Lipopolysaccharide core heptose(II)-phosphate phosphatase, found in Escherichia coli O157:H7.